Reading from the N-terminus, the 239-residue chain is Uridylate kinase (239 aa).

13 to 16 (KISG) contributes to the ATP binding site. UMP is bound at residue Gly55. Residues Gly56 and Arg60 each contribute to the ATP site. Residues Asp75 and 136-143 (LGIPFFTT) contribute to the UMP site. Positions 163, 169, and 172 each coordinate ATP.

It belongs to the UMP kinase family. As to quaternary structure, homohexamer.

Its subcellular location is the cytoplasm. The enzyme catalyses UMP + ATP = UDP + ADP. Its pathway is pyrimidine metabolism; CTP biosynthesis via de novo pathway; UDP from UMP (UMPK route): step 1/1. Its activity is regulated as follows. Inhibited by UTP. Functionally, catalyzes the reversible phosphorylation of UMP to UDP. This Buchnera aphidicola subsp. Cinara cedri (strain Cc) protein is Uridylate kinase.